Reading from the N-terminus, the 192-residue chain is Adenine phosphoribosyltransferase 2 (192 aa).

It belongs to the purine/pyrimidine phosphoribosyltransferase family. In terms of assembly, homodimer.

Its subcellular location is the cytoplasm. The catalysed reaction is AMP + diphosphate = 5-phospho-alpha-D-ribose 1-diphosphate + adenine. It participates in purine metabolism; AMP biosynthesis via salvage pathway; AMP from adenine: step 1/1. Its function is as follows. Catalyzes a salvage reaction resulting in the formation of AMP, that is energically less costly than de novo synthesis. May contribute to the recycling of adenine into adenylate nucleotides and the inactivation of cytokinins by phosphoribosylation. Possesses low activity toward adenine and cytokinins. The sequence is that of Adenine phosphoribosyltransferase 2 (APT2) from Arabidopsis thaliana (Mouse-ear cress).